Consider the following 217-residue polypeptide: uncharacterized protein (217 aa).

6 helical membrane-spanning segments follow: residues 13 to 35 (IWLT…IALL), 50 to 68 (FSLV…ILYL), 75 to 94 (FLLA…EWRI), 109 to 131 (MMAL…LFSL), 152 to 174 (YLAI…AAAV), and 194 to 216 (GFSL…FAGL).

Its subcellular location is the cell membrane. This is an uncharacterized protein from Archaeoglobus fulgidus (strain ATCC 49558 / DSM 4304 / JCM 9628 / NBRC 100126 / VC-16).